A 236-amino-acid polypeptide reads, in one-letter code: 2,3,4,5-tetrahydropyridine-2,6-dicarboxylate N-acetyltransferase (236 aa).

Belongs to the transferase hexapeptide repeat family. DapH subfamily.

It catalyses the reaction (S)-2,3,4,5-tetrahydrodipicolinate + acetyl-CoA + H2O = L-2-acetamido-6-oxoheptanedioate + CoA. The protein operates within amino-acid biosynthesis; L-lysine biosynthesis via DAP pathway; LL-2,6-diaminopimelate from (S)-tetrahydrodipicolinate (acetylase route): step 1/3. In terms of biological role, catalyzes the transfer of an acetyl group from acetyl-CoA to tetrahydrodipicolinate. The sequence is that of 2,3,4,5-tetrahydropyridine-2,6-dicarboxylate N-acetyltransferase from Lactiplantibacillus plantarum (strain ATCC BAA-793 / NCIMB 8826 / WCFS1) (Lactobacillus plantarum).